The sequence spans 233 residues: MLCSIEKIEPLTSFIFRVLLKPDQPFEFRAGQYINVSLSFGSLPFSIASCPSNGAFLELHIGGSDISKKNTLVMEELTNSWGCGNMVEVSEARGKAWLRDESVKPLLLVAGGTGMSYTLSILKNSLAQGFNQPIYVYWGAKDMENLYVHDELVDIALENKNVSYVPVTEISTCPQYAKQGKVLECVMSDFRNLSEFDIYLCGPYKMVEVARDWFCDKRGAEPEQLYADAFAYL.

An FAD-binding FR-type domain is found at 1–133 (MLCSIEKIEP…NSLAQGFNQP (133 aa)). 111-115 (GGTGM) is a binding site for pyridine.

The protein belongs to the Fre/LuxG FAD/NAD(P) flavoprotein oxidoreductase family.

Functionally, probable flavin reductase in the luminescent systems of different marine bacteria. This chain is Probable flavin reductase (luxG), found in Vibrio harveyi (Beneckea harveyi).